Reading from the N-terminus, the 488-residue chain is Germacrene A hydroxylase (488 aa).

A helical; Signal-anchor for type II membrane protein membrane pass occupies residues 7–23; the sequence is TSIALATILFFVYKFAT. Asparagine 169, asparagine 260, asparagine 379, and asparagine 410 each carry an N-linked (GlcNAc...) asparagine glycan. Residue cysteine 432 coordinates heme.

Belongs to the cytochrome P450 family. Expressed in floral glandular trichomes.

It is found in the endoplasmic reticulum membrane. The catalysed reaction is (+)-(R)-germacrene A + 3 reduced [NADPH--hemoprotein reductase] + 3 O2 = germacra-1(10),4,11(13)-trien-12-oate + 3 oxidized [NADPH--hemoprotein reductase] + 4 H2O + 4 H(+). Its pathway is secondary metabolite biosynthesis; terpenoid biosynthesis. In terms of biological role, involved in the biosynthesis of germacrene-derived sesquiterpene lactones. Component of the parthenolide biosynthetic pathway; parthenolide and conjugates are promising anti-cancer drugs highly active against colon cancer cells. Catalyzes three consecutive oxidations of germacrene A to produce germacrene A acid. The protein is Germacrene A hydroxylase of Tanacetum parthenium (Feverfew).